The following is a 349-amino-acid chain: MGRVFKKKGGAKREAEEEKQEELVMRKKLRKEEEPEPVEDVEEDEDVSDEDDEDIDDEEEDEDEQNIMDFDFEAYPPSEDDRDGIVNMLTQTFLRTDIDLKAMSEGIIAKAPHGVVLTQAYDDEETEEDYMAYGLCTTVPLNDNKDDAPKFIKDLFTYVLNRAKKGAPTEIYKKIEEIQVSGDGKSALFVNERLLNFPTIVVPQIFGSIREDLSGFETKYKTIIYIQKLRIVETDGSEAKVGASSNGSSGVAGKKKGKMGKAEKKRAAAAALANAEIEFDNPEDRVLFEIKEGKEIHFDYPVHMDVEPGSKFHSTEKDGKKWNPFRRLVIMDDKRFDAFLKKGSDGIII.

The span at Met-1–Gly-10 shows a compositional bias: basic residues. The tract at residues Met-1 to Gln-65 is disordered. Basic and acidic residues predominate over residues Ala-11–Glu-33. A compositionally biased stretch (acidic residues) spans Glu-34 to Gln-65.

Belongs to the BCP1 family.

This is Protein BCCIP homolog from Caenorhabditis elegans.